The sequence spans 459 residues: MDTIAAISTPMGEGAIAIVRMSGPEALAIADKVYKGPRGKRLSSVDSHTINYGHIVDPETEKVVEEVMVSVLKAPKTFTREDIVEINCHGGLVTVNQVLQLVLREGARLAEPGEFTKRAFLNGRIDLSQAEAVMDLIRAKTDRAMNVAMNQMEGRLSSLIKRLRAEILETLAHVEVNIDYPEYDDVEEMTHKMLIEKATKVKKEIEALLTTSEQGKILREGISTVIIGRPNVGKSSLLNSLVHETKAIVTDIPGTTRDVIEEYVNVRGVPLRLVDTAGIRETEDIVERIGVERSRQVLKEADLILLVLNYSESLSDEDIKLFEATKGMDIIVIVNKTDLEQKLDLDRVRELAGNQPVVTTSLLKEEGIDELEEAIQSLFFTGAIESGDLTYVSNTRHISLLHEAKRAITDALEGIENDVPIDMVQIDLTRCWEVLGEIIGDAVHESLIDQLFSQFCLGK.

Residues Arg20, Glu85, and Arg124 each coordinate (6S)-5-formyl-5,6,7,8-tetrahydrofolate. A TrmE-type G domain is found at 221 to 380; sequence GISTVIIGRP…LEEAIQSLFF (160 aa). Asn231 provides a ligand contact to K(+). GTP-binding positions include 231–236, 250–256, and 275–278; these read NVGKSS, TDIPGTT, and DTAG. Ser235 serves as a coordination point for Mg(2+). K(+) is bound by residues Thr250, Ile252, and Thr255. Thr256 serves as a coordination point for Mg(2+). Lys459 lines the (6S)-5-formyl-5,6,7,8-tetrahydrofolate pocket.

It belongs to the TRAFAC class TrmE-Era-EngA-EngB-Septin-like GTPase superfamily. TrmE GTPase family. As to quaternary structure, homodimer. Heterotetramer of two MnmE and two MnmG subunits. Requires K(+) as cofactor.

The protein resides in the cytoplasm. Exhibits a very high intrinsic GTPase hydrolysis rate. Involved in the addition of a carboxymethylaminomethyl (cmnm) group at the wobble position (U34) of certain tRNAs, forming tRNA-cmnm(5)s(2)U34. The chain is tRNA modification GTPase MnmE from Bacillus licheniformis (strain ATCC 14580 / DSM 13 / JCM 2505 / CCUG 7422 / NBRC 12200 / NCIMB 9375 / NCTC 10341 / NRRL NRS-1264 / Gibson 46).